The following is a 281-amino-acid chain: Bifunctional protein FolD (281 aa).

NADP(+) contacts are provided by residues 165–167 and S190; that span reads GRS.

Belongs to the tetrahydrofolate dehydrogenase/cyclohydrolase family. In terms of assembly, homodimer.

The catalysed reaction is (6R)-5,10-methylene-5,6,7,8-tetrahydrofolate + NADP(+) = (6R)-5,10-methenyltetrahydrofolate + NADPH. The enzyme catalyses (6R)-5,10-methenyltetrahydrofolate + H2O = (6R)-10-formyltetrahydrofolate + H(+). It functions in the pathway one-carbon metabolism; tetrahydrofolate interconversion. Functionally, catalyzes the oxidation of 5,10-methylenetetrahydrofolate to 5,10-methenyltetrahydrofolate and then the hydrolysis of 5,10-methenyltetrahydrofolate to 10-formyltetrahydrofolate. The polypeptide is Bifunctional protein FolD (Polaromonas sp. (strain JS666 / ATCC BAA-500)).